Here is a 99-residue protein sequence, read N- to C-terminus: Acylphosphatase (99 aa).

In terms of domain architecture, Acylphosphatase-like spans 11 to 97 (ARRIHVKGKV…VVAQGFTQKP (87 aa)). Catalysis depends on residues R26 and N44.

Belongs to the acylphosphatase family.

It catalyses the reaction an acyl phosphate + H2O = a carboxylate + phosphate + H(+). The sequence is that of Acylphosphatase (acyP) from Rhizorhabdus wittichii (strain DSM 6014 / CCUG 31198 / JCM 15750 / NBRC 105917 / EY 4224 / RW1) (Sphingomonas wittichii).